A 259-amino-acid chain; its full sequence is Aspartate/glutamate leucyltransferase (259 aa).

It belongs to the R-transferase family. Bpt subfamily.

It is found in the cytoplasm. The catalysed reaction is N-terminal L-glutamyl-[protein] + L-leucyl-tRNA(Leu) = N-terminal L-leucyl-L-glutamyl-[protein] + tRNA(Leu) + H(+). The enzyme catalyses N-terminal L-aspartyl-[protein] + L-leucyl-tRNA(Leu) = N-terminal L-leucyl-L-aspartyl-[protein] + tRNA(Leu) + H(+). In terms of biological role, functions in the N-end rule pathway of protein degradation where it conjugates Leu from its aminoacyl-tRNA to the N-termini of proteins containing an N-terminal aspartate or glutamate. The chain is Aspartate/glutamate leucyltransferase from Sinorhizobium medicae (strain WSM419) (Ensifer medicae).